The following is a 409-amino-acid chain: Argininosuccinate synthase (409 aa).

ATP-binding positions include 10–18 and alanine 37; that span reads AYSGGLDTS. L-citrulline is bound by residues tyrosine 90 and serine 95. Glycine 120 serves as a coordination point for ATP. Residues threonine 122, asparagine 126, and aspartate 127 each contribute to the L-aspartate site. Asparagine 126 is an L-citrulline binding site. Residues arginine 130, serine 182, serine 191, glutamate 267, and tyrosine 279 each contribute to the L-citrulline site.

It belongs to the argininosuccinate synthase family. Type 1 subfamily. In terms of assembly, homotetramer.

Its subcellular location is the cytoplasm. The enzyme catalyses L-citrulline + L-aspartate + ATP = 2-(N(omega)-L-arginino)succinate + AMP + diphosphate + H(+). It functions in the pathway amino-acid biosynthesis; L-arginine biosynthesis; L-arginine from L-ornithine and carbamoyl phosphate: step 2/3. The protein is Argininosuccinate synthase of Thiobacillus denitrificans (strain ATCC 25259 / T1).